The sequence spans 603 residues: Multicopper oxidase MCE (603 aa).

The N-terminal stretch at 1–21 is a signal peptide; that stretch reads MNTFICSALICLSWLPGFIQA. The 115-residue stretch at 30 to 144 folds into the Plastocyanin-like 1 domain; it reads ITYAKGAPDG…YGALWIRPKE (115 aa). N-linked (GlcNAc...) asparagine glycosylation occurs at asparagine 75. Residues histidine 79, histidine 81, histidine 123, and histidine 125 each contribute to the Cu cation site. N-linked (GlcNAc...) asparagine glycosylation is found at asparagine 155, asparagine 180, asparagine 235, asparagine 256, asparagine 272, asparagine 275, asparagine 388, asparagine 394, asparagine 413, and asparagine 455. The 181-residue stretch at 173–353 folds into the Plastocyanin-like 2 domain; the sequence is LIVSDWSNFT…TPGDYTIRLP (181 aa). The region spanning 450–581 is the Plastocyanin-like 3 domain; the sequence is LLYNPNSTAA…GGMAGVIMDG (132 aa). Histidine 495 provides a ligand contact to Cu cation. N-linked (GlcNAc...) asparagine glycosylation is found at asparagine 512 and asparagine 595.

This sequence belongs to the multicopper oxidase family.

It catalyses the reaction 4 monapinone A + O2 = 2 dinapinone A + 2 H2O. It carries out the reaction 4 monapinone E + O2 = 2 dinapinone E + 2 H2O. It functions in the pathway secondary metabolite biosynthesis. In terms of biological role, multicopper oxidase; part of the gene cluster that mediates the biosynthesis of dinapinones DPA1 (or (M)-DPA) and DPA2 (or (P)-DPA), biaryl dihydronaphthopyranones that act in concert as inhibitors of triacylglycerol accumulation in mammalian cells. The first step in the pathway corresponds to the biosynthesis of dihydroxy-decanoyl-CoA by the fungal type I fatty acid synthase (formed by ORF4 and ORF5). The cluster-specific polyketide synthase (ORF7) then accepts and extends dihydroxy-decanoyl-CoA with 6 malonyl-CoA moieties and cyclizes the molecule to produce a putative polyhydroxynaphthopyranone intermediate, which is further methylated by the cluster-specific methyltransferase (ORF1) at 7-OH to produce monapinone A (MPA). MCE catalyzes the regioselective biaryl coupling of monapinone A (MPA) at the 8,8'-positions to afford dimeric atropisomers DPA1 and DPA2 in a ratio of approximately 1:2.5. Monapinone E (MPE) also appears to be a substrate for MCE and provides the atropisomers dinapinones DPE1 (or (M)-DPE) and DPE2 (or (P)-DPE). This Talaromyces pinophilus (Penicillium pinophilum) protein is Multicopper oxidase MCE.